The chain runs to 244 residues: DNA repair protein RecO (244 aa).

This sequence belongs to the RecO family.

Functionally, involved in DNA repair and RecF pathway recombination. This Polynucleobacter asymbioticus (strain DSM 18221 / CIP 109841 / QLW-P1DMWA-1) (Polynucleobacter necessarius subsp. asymbioticus) protein is DNA repair protein RecO.